Reading from the N-terminus, the 394-residue chain is Elongation factor Tu (394 aa).

Residues 10–204 (KPHVNVGTIG…ALDSYIPTPE (195 aa)) form the tr-type G domain. A G1 region spans residues 19–26 (GHVDHGKT). Position 19 to 26 (19 to 26 (GHVDHGKT)) interacts with GTP. Residue Thr26 participates in Mg(2+) binding. The interval 60 to 64 (GITIN) is G2. The G3 stretch occupies residues 81–84 (DCPG). GTP contacts are provided by residues 81–85 (DCPGH) and 136–139 (NKCD). The interval 136–139 (NKCD) is G4. The interval 174–176 (SAL) is G5.

The protein belongs to the TRAFAC class translation factor GTPase superfamily. Classic translation factor GTPase family. EF-Tu/EF-1A subfamily. As to quaternary structure, monomer.

It localises to the cytoplasm. It catalyses the reaction GTP + H2O = GDP + phosphate + H(+). GTP hydrolase that promotes the GTP-dependent binding of aminoacyl-tRNA to the A-site of ribosomes during protein biosynthesis. In Neisseria meningitidis serogroup A / serotype 4A (strain DSM 15465 / Z2491), this protein is Elongation factor Tu.